We begin with the raw amino-acid sequence, 309 residues long: Homoserine kinase (309 aa).

Position 91–101 (91–101 (PIGSGLGSSAC)) interacts with ATP.

This sequence belongs to the GHMP kinase family. Homoserine kinase subfamily.

It localises to the cytoplasm. The enzyme catalyses L-homoserine + ATP = O-phospho-L-homoserine + ADP + H(+). It functions in the pathway amino-acid biosynthesis; L-threonine biosynthesis; L-threonine from L-aspartate: step 4/5. In terms of biological role, catalyzes the ATP-dependent phosphorylation of L-homoserine to L-homoserine phosphate. The protein is Homoserine kinase of Yersinia pseudotuberculosis serotype O:1b (strain IP 31758).